Here is a 437-residue protein sequence, read N- to C-terminus: Glutamate-1-semialdehyde 2,1-aminomutase (437 aa).

At K274 the chain carries N6-(pyridoxal phosphate)lysine.

It belongs to the class-III pyridoxal-phosphate-dependent aminotransferase family. HemL subfamily. As to quaternary structure, homodimer. Requires pyridoxal 5'-phosphate as cofactor.

The protein resides in the cytoplasm. It catalyses the reaction (S)-4-amino-5-oxopentanoate = 5-aminolevulinate. It participates in porphyrin-containing compound metabolism; protoporphyrin-IX biosynthesis; 5-aminolevulinate from L-glutamyl-tRNA(Glu): step 2/2. In Leptothrix cholodnii (strain ATCC 51168 / LMG 8142 / SP-6) (Leptothrix discophora (strain SP-6)), this protein is Glutamate-1-semialdehyde 2,1-aminomutase.